Consider the following 644-residue polypeptide: Threonine--tRNA ligase (644 aa).

The region spanning 1–61 is the TGS domain; it reads MPVITLPDGS…EKDTKLTIIT (61 aa). The catalytic stretch occupies residues 242–535; sequence DHRRIGADLD…LIEHYEGKFP (294 aa). 3 residues coordinate Zn(2+): C335, H386, and H512.

It belongs to the class-II aminoacyl-tRNA synthetase family. Homodimer. Zn(2+) is required as a cofactor.

It is found in the cytoplasm. It catalyses the reaction tRNA(Thr) + L-threonine + ATP = L-threonyl-tRNA(Thr) + AMP + diphosphate + H(+). Its function is as follows. Catalyzes the attachment of threonine to tRNA(Thr) in a two-step reaction: L-threonine is first activated by ATP to form Thr-AMP and then transferred to the acceptor end of tRNA(Thr). Also edits incorrectly charged L-seryl-tRNA(Thr). The chain is Threonine--tRNA ligase from Nitrosococcus oceani (strain ATCC 19707 / BCRC 17464 / JCM 30415 / NCIMB 11848 / C-107).